Here is a 251-residue protein sequence, read N- to C-terminus: Osmotin-like protein (251 aa).

Positions 1–21 are cleaved as a signal peptide; sequence MSHLTTFLVFFLLAFVTYTYA. 8 cysteine pairs are disulfide-bonded: C31/C226, C73/C83, C88/C94, C142/C214, C147/C197, C155/C165, C169/C178, and C179/C184. Residue N233 is glycosylated (N-linked (GlcNAc...) asparagine).

This sequence belongs to the thaumatin family.

This chain is Osmotin-like protein (OLPA), found in Nicotiana tabacum (Common tobacco).